The sequence spans 409 residues: Peptidase T (409 aa).

A Zn(2+)-binding site is contributed by H78. The active site involves D80. D140 contributes to the Zn(2+) binding site. The Proton acceptor role is filled by E173. Positions 174, 196, and 379 each coordinate Zn(2+).

The protein belongs to the peptidase M20B family. Zn(2+) is required as a cofactor.

It is found in the cytoplasm. It catalyses the reaction Release of the N-terminal residue from a tripeptide.. Cleaves the N-terminal amino acid of tripeptides. This is Peptidase T from Salmonella enteritidis PT4 (strain P125109).